A 459-amino-acid polypeptide reads, in one-letter code: Cysteine--tRNA ligase (459 aa).

Cysteine 28 is a binding site for Zn(2+). A 'HIGH' region motif is present at residues valine 30–histidine 40. The Zn(2+) site is built by cysteine 209, histidine 234, and glutamate 238. Residues lysine 266–serine 270 carry the 'KMSKS' region motif. An ATP-binding site is contributed by lysine 269.

It belongs to the class-I aminoacyl-tRNA synthetase family. Monomer. Requires Zn(2+) as cofactor.

The protein resides in the cytoplasm. It carries out the reaction tRNA(Cys) + L-cysteine + ATP = L-cysteinyl-tRNA(Cys) + AMP + diphosphate. This is Cysteine--tRNA ligase from Haemophilus influenzae (strain PittGG).